The primary structure comprises 165 residues: UPF0178 protein Bphyt_5655 (165 aa).

Disordered regions lie at residues 115-134 and 139-165; these read LRGS…RDSK and ELDR…PPTE.

The protein belongs to the UPF0178 family.

This chain is UPF0178 protein Bphyt_5655, found in Paraburkholderia phytofirmans (strain DSM 17436 / LMG 22146 / PsJN) (Burkholderia phytofirmans).